Reading from the N-terminus, the 556-residue chain is Potassium-transporting ATPase potassium-binding subunit (556 aa).

The next 10 membrane-spanning stretches (helical) occupy residues 1-21 (MTWI…GIAQ), 60-80 (SYAR…YALQ), 130-150 (GLCV…VALI), 173-193 (LRIL…GGAV), 245-265 (PQPW…FSLP), 281-301 (ILAA…AAEF), 374-394 (GLYG…LLVG), 416-436 (ILVM…VPGL), 482-502 (AALG…ILAL), and 529-549 (LIVF…LTLG).

The protein belongs to the KdpA family. As to quaternary structure, the system is composed of three essential subunits: KdpA, KdpB and KdpC.

Its subcellular location is the cell membrane. Functionally, part of the high-affinity ATP-driven potassium transport (or Kdp) system, which catalyzes the hydrolysis of ATP coupled with the electrogenic transport of potassium into the cytoplasm. This subunit binds the extracellular potassium ions and delivers the ions to the membrane domain of KdpB through an intramembrane tunnel. This is Potassium-transporting ATPase potassium-binding subunit from Cutibacterium acnes (strain DSM 16379 / KPA171202) (Propionibacterium acnes).